A 103-amino-acid polypeptide reads, in one-letter code: Small ribosomal subunit protein bS18 (103 aa).

Residues 1 to 19 are compositionally biased toward basic and acidic residues; the sequence is MSEERTERPERTERPERPQ. Positions 1–33 are disordered; the sequence is MSEERTERPERTERPERPQQRGSGPRKRRPFQR. Basic residues predominate over residues 24–33; sequence GPRKRRPFQR.

The protein belongs to the bacterial ribosomal protein bS18 family. In terms of assembly, part of the 30S ribosomal subunit. Forms a tight heterodimer with protein bS6.

Functionally, binds as a heterodimer with protein bS6 to the central domain of the 16S rRNA, where it helps stabilize the platform of the 30S subunit. The chain is Small ribosomal subunit protein bS18 from Geobacter sulfurreducens (strain ATCC 51573 / DSM 12127 / PCA).